The primary structure comprises 431 residues: Keratin, type I cytoskeletal 40 (431 aa).

Residues 1 to 89 (MASEGSPDCC…CEEGTFNSNE (89 aa)) form a head region. The 312-residue stretch at 89–400 (EKETMQFLND…GLLEKEDSRL (312 aa)) folds into the IF rod domain. A coil 1A region spans residues 90 to 124 (KETMQFLNDRLASYLERVRSLEENNAELECRIREQ). Residues 125–135 (CEPDATPVCPD) are linker 1. Residues 136–236 (YQRYFDTIEE…HEEEVNLLRE (101 aa)) form a coil 1B region. Residues 237-252 (QLGDRLNVELDTAPTV) are linker 12. The coil 2 stretch occupies residues 253–396 (DLNKVLDEMR…NTYRGLLEKE (144 aa)). Residues 397 to 431 (DSRLPCNPGSTASISNSACEPCSAYVICTVENCCA) are tail.

It belongs to the intermediate filament family. Heterotetramer of two type I and two type II keratins.

Its function is as follows. May play a role in late hair differentiation. The sequence is that of Keratin, type I cytoskeletal 40 (Krt40) from Rattus norvegicus (Rat).